The chain runs to 172 residues: Auxin-responsive protein IAA30 (172 aa).

Residues 1–18 (MGRGRSSSSSSIESSCKS) are compositionally biased toward low complexity. Residues 1–28 (MGRGRSSSSSSIESSCKSNPFGVSSSNT) are disordered. The EAR-like (transcriptional repression) motif lies at 35–39 (LRLGL). Residues 82–171 (SFYVKVNMEG…RRLKISRAYH (90 aa)) enclose the PB1 domain.

The protein belongs to the Aux/IAA family. Homodimers and heterodimers.

Its subcellular location is the nucleus. Functionally, aux/IAA proteins are short-lived transcriptional factors that function as repressors of early auxin response genes at low auxin concentrations. Repression is thought to result from the interaction with auxin response factors (ARFs), proteins that bind to the auxin-responsive promoter element (AuxRE). Formation of heterodimers with ARF proteins may alter their ability to modulate early auxin response genes expression. In Arabidopsis thaliana (Mouse-ear cress), this protein is Auxin-responsive protein IAA30 (IAA30).